The primary structure comprises 317 residues: Melanocyte-stimulating hormone receptor (317 aa).

At 1 to 37 (MPVLGSQRRLLGSLNCTPPATLPLTLAPNRTGPQCLE) the chain is on the extracellular side. N-linked (GlcNAc...) asparagine glycosylation is present at Asn-29. The helical transmembrane segment at 38–63 (VSIPDGLFLSLGLVSLVENVLVVAAI) threads the bilayer. At 64-72 (AKNRNLHSP) the chain is on the cytoplasmic side. The chain crosses the membrane as a helical span at residues 73-93 (MYYFICCLAMSDLLVSVSNVL). At 94-118 (ETAVMLLLEAGVLATRAAVVQQLDN) the chain is on the extracellular side. The helical transmembrane segment at 119-140 (VIDVLICSSMVSSLCFLGAIAV) threads the bilayer. Residues 141–163 (DRYISIFYALRYHSVVTLPRAWR) lie on the Cytoplasmic side of the membrane. Residues 164 to 183 (IIAAIWVASILTSVLSITYY) traverse the membrane as a helical segment. Over 184–191 (NHTVVLLC) the chain is Extracellular. The chain crosses the membrane as a helical span at residues 192 to 211 (LVGFFIAMLALMAVLYVHML). The Cytoplasmic portion of the chain corresponds to 212-240 (ARACQHARGIARLQKRQRPIHQGFGLKGA). Residues 241 to 266 (ATLTILLGVFFLCWGPFFLHLSLIVL) traverse the membrane as a helical segment. The Extracellular portion of the chain corresponds to 267 to 279 (CPQHPTCGCIFKN). Residues 280-300 (FNLFLALIICNAIVDPLIYAF) form a helical membrane-spanning segment. Residues 301–317 (RSQELRKTLQEVLQCSW) are Cytoplasmic-facing. Cys-315 carries S-palmitoyl cysteine lipidation.

This sequence belongs to the G-protein coupled receptor 1 family. As to quaternary structure, interacts with MGRN1, but does not undergo MGRN1-mediated ubiquitination; this interaction competes with GNAS-binding and thus inhibits agonist-induced cAMP production. Interacts with OPN3; the interaction results in a decrease in MC1R-mediated cAMP signaling and ultimately a decrease in melanin production in melanocytes.

It is found in the cell membrane. Receptor for MSH (alpha, beta and gamma) and ACTH. The activity of this receptor is mediated by G proteins which activate adenylate cyclase. Mediates melanogenesis, the production of eumelanin (black/brown) and phaeomelanin (red/yellow), via regulation of cAMP signaling in melanocytes. This chain is Melanocyte-stimulating hormone receptor (MC1R), found in Ovis aries (Sheep).